Consider the following 235-residue polypeptide: Retron Ec48 transmembrane protein (235 aa).

The next 2 membrane-spanning stretches (helical) occupy residues 11–31 and 64–84; these read IVGV…FETI and AFGW…ALMT.

It is found in the cell inner membrane. Membrane component of antiviral defense system Retron Ec48, composed of a non-coding RNA (ncRNA), a reverse transcriptase (RT) and this membrane protein. Expression of this retron confers protection against bacteriophages lambda, T2, T4, T5 and T7. At multiplicity of infection (MOI) of 0.02 cultures grow normally when infected with lambda without collapsing, at MOI 2 cultures enter growth stasis. At MOI 3 cell membranes are permeabilized within 15 minutes of infection but do not lyse, suggesting the phage are not able to finish a replication cycle. Antiviral defense is suppressed by mutations that knockout the lambda gam expression or phage T7 gp5.9 expression; both viral genes inhibit host RecBCD. The Ec48 retron may sense the integrity of the RecBCD enzyme; when RecBCD is perturbed by viral proteins the Ec48 effector (the membrane protein) is activated, leading to abortive infection and bacterial growth arrest. This chain is Retron Ec48 transmembrane protein, found in Escherichia coli.